Here is a 509-residue protein sequence, read N- to C-terminus: Thymus-specific serine protease (509 aa).

The first 22 residues, 1–22 (MAVKAPWLGFLLLVSLWGLSTP), serve as a signal peptide directing secretion. 2 N-linked (GlcNAc...) asparagine glycosylation sites follow: Asn-69 and Asn-171. Residue Ser-184 is the Charge relay system of the active site. The N-linked (GlcNAc...) asparagine glycan is linked to Asn-320. Catalysis depends on charge relay system residues Asp-446 and His-471.

The protein belongs to the peptidase S28 family. In terms of tissue distribution, expressed predominantly in cortical thymic epithelial cells, with highest expression around vessels and the thymic capsule.

The protein localises to the cytoplasmic vesicle. Its function is as follows. Protease that may play a role in T-cell development. This is Thymus-specific serine protease (Prss16) from Mus musculus (Mouse).